Reading from the N-terminus, the 277-residue chain is Insulin-induced gene 1 protein (277 aa).

The Cytoplasmic portion of the chain corresponds to 1-84 (MPRLHDHFWS…PYPNTWHHRL (84 aa)). A compositionally biased stretch (low complexity) spans 51–66 (HGAPDADPAPRGRSAA). The tract at residues 51 to 73 (HGAPDADPAPRGRSAAMSGPEPG) is disordered. Residues 85-107 (LQRSLVLFSVGVVLALVLNLLQI) form a helical membrane-spanning segment. The Lumenal segment spans residues 108–126 (QRNVTLFPEEVIATIFSSA). A helical membrane pass occupies residues 127–144 (WWVPPCCGTAAAVVGLLY). At 145–159 (PCIDSHLGEPHKFKR) the chain is on the cytoplasmic side. Glycyl lysine isopeptide (Lys-Gly) (interchain with G-Cter in ubiquitin) cross-links involve residues K156 and K158. A helical membrane pass occupies residues 160-182 (EWASVMRCIAVFVGINHASAKLD). Topologically, residues 183–185 (FAN) are lumenal. Residues 186–204 (NVQLSLTLAALSLGLWWTF) traverse the membrane as a helical segment. Over 205–209 (DRSRS) the chain is Cytoplasmic. Position 207 is a phosphoserine; by PCK1 (S207). The helical transmembrane segment at 210-231 (GLGLGITIAFLATLITQFLVYN) threads the bilayer. Residues 232–245 (GVYQYTSPDFLYIR) are Lumenal-facing. A helical membrane pass occupies residues 246 to 263 (SWLPCIFFSGGVTVGNIG). The Cytoplasmic portion of the chain corresponds to 264–277 (RQLAMGVPEKPHSD). The short motif at 271 to 277 (PEKPHSD) is the KxHxx element.

The protein belongs to the INSIG family. Interacts with SCAP; interaction is direct and only takes place in the presence of sterols; it prevents interaction between SCAP and the coat protein complex II (COPII). Associates with the SCAP-SREBP complex (composed of SCAP and SREBF1/SREBP1 or SREBF2/SREBP2); association is mediated via its interaction with SCAP and only takes place in the presence of sterols. Interaction with SCAP is mutually exclusive with PAQR3. Interacts with HMGCR (via its SSD); the interaction, accelerated by sterols, leads to the recruitment of HMGCR to AMFR/gp78 for its ubiquitination by the sterol-mediated ERAD pathway. Interacts with AMFR/gp78 (via its membrane domain); the interaction recruits HMCR at the ER membrane for its ubiquitination and degradation by the sterol-mediated ERAD pathway. Interacts with SOAT2/ACAT2; leading to promote recruitment of AMFR/gp78 and subsequent ubiquitination of SOAT2/ACAT2. Interacts with RNF139. Interacts with RNF145. Phosphorylation at Ser-207 by PCK1 reduces binding to oxysterol, disrupting the interaction between INSIG1 and SCAP, thereby promoting nuclear translocation of SREBP proteins (SREBF1/SREBP1 or SREBF2/SREBP2) and subsequent transcription of downstream lipogenesis-related genes. In terms of processing, ubiquitinated by AMFR/gp78 in response to sterol deprivation, leading to its degradation: when the SCAP-SREBP complex becomes dissociated from INSIG1, INSIG1 is then ubiquitinated and degraded in proteasomes. Although ubiquitination is required for rapid INSIG1 degradation, it is not required for release of the SCAP-SREBP complex. Ubiquitinated by RNF139. In terms of tissue distribution, expressed in all tissues tested with highest expression in the liver.

It is found in the endoplasmic reticulum membrane. Oxysterol-binding protein that mediates feedback control of cholesterol synthesis by controlling both endoplasmic reticulum to Golgi transport of SCAP and degradation of HMGCR. Acts as a negative regulator of cholesterol biosynthesis by mediating the retention of the SCAP-SREBP complex in the endoplasmic reticulum, thereby blocking the processing of sterol regulatory element-binding proteins (SREBPs) SREBF1/SREBP1 and SREBF2/SREBP2. Binds oxysterol, including 25-hydroxycholesterol, regulating interaction with SCAP and retention of the SCAP-SREBP complex in the endoplasmic reticulum. In presence of oxysterol, interacts with SCAP, retaining the SCAP-SREBP complex in the endoplasmic reticulum, thereby preventing SCAP from escorting SREBF1/SREBP1 and SREBF2/SREBP2 to the Golgi. Sterol deprivation or phosphorylation by PCK1 reduce oxysterol-binding, disrupting the interaction between INSIG1 and SCAP, thereby promoting Golgi transport of the SCAP-SREBP complex, followed by processing and nuclear translocation of SREBF1/SREBP1 and SREBF2/SREBP2. Also regulates cholesterol synthesis by regulating degradation of HMGCR: initiates the sterol-mediated ubiquitin-mediated endoplasmic reticulum-associated degradation (ERAD) of HMGCR via recruitment of the reductase to the ubiquitin ligases AMFR/gp78 and/or RNF139. Also regulates degradation of SOAT2/ACAT2 when the lipid levels are low: initiates the ubiquitin-mediated degradation of SOAT2/ACAT2 via recruitment of the ubiquitin ligases AMFR/gp78. The protein is Insulin-induced gene 1 protein of Homo sapiens (Human).